A 257-amino-acid chain; its full sequence is NAD-dependent protein deacylase (257 aa).

The 252-residue stretch at 1 to 252 (MLGHAAKLLA…LRRVKDIMAE (252 aa)) folds into the Deacetylase sirtuin-type domain. Position 20–39 (20–39 (GAGISAESGIPTFRGRNGLW)) interacts with NAD(+). Substrate is bound by residues Tyr64 and Arg67. 98 to 101 (QNVD) provides a ligand contact to NAD(+). The active-site Proton acceptor is His116. Zn(2+) is bound by residues Cys124, Cys127, Cys151, and Cys154. Residues 191–193 (GTS), 217–219 (NVE), and Ala235 each bind NAD(+).

This sequence belongs to the sirtuin family. Class III subfamily. Zn(2+) serves as cofactor.

It localises to the cytoplasm. The catalysed reaction is N(6)-acetyl-L-lysyl-[protein] + NAD(+) + H2O = 2''-O-acetyl-ADP-D-ribose + nicotinamide + L-lysyl-[protein]. It carries out the reaction N(6)-succinyl-L-lysyl-[protein] + NAD(+) + H2O = 2''-O-succinyl-ADP-D-ribose + nicotinamide + L-lysyl-[protein]. In terms of biological role, NAD-dependent lysine deacetylase and desuccinylase that specifically removes acetyl and succinyl groups on target proteins. Modulates the activities of several proteins which are inactive in their acylated form. Deacetylates the N-terminal lysine residue of Alba, the major archaeal chromatin protein and that, in turn, increases Alba's DNA binding affinity, thereby repressing transcription. The protein is NAD-dependent protein deacylase of Thermococcus kodakarensis (strain ATCC BAA-918 / JCM 12380 / KOD1) (Pyrococcus kodakaraensis (strain KOD1)).